Consider the following 280-residue polypeptide: Phosphonates import ATP-binding protein PhnC 1 (280 aa).

Positions 2–246 (LRIENLDKRY…VLTRIYGEED (245 aa)) constitute an ABC transporter domain. 35–42 (GPSGAGKS) lines the ATP pocket. The segment at 247 to 266 (WSKTSDEDADSVDAPPRAAD) is disordered.

Belongs to the ABC transporter superfamily. Phosphonates importer (TC 3.A.1.9.1) family. As to quaternary structure, the complex is composed of two ATP-binding proteins (PhnC), two transmembrane proteins (PhnE) and a solute-binding protein (PhnD).

The protein localises to the cell inner membrane. It catalyses the reaction phosphonate(out) + ATP + H2O = phosphonate(in) + ADP + phosphate + H(+). Part of the ABC transporter complex PhnCDE involved in phosphonates import. Responsible for energy coupling to the transport system. This Rhodopseudomonas palustris (strain HaA2) protein is Phosphonates import ATP-binding protein PhnC 1.